Consider the following 304-residue polypeptide: Putative S-adenosyl-L-methionine-dependent methyltransferase MAP_4189c (304 aa).

Residues Asp130 and 159–160 (DL) contribute to the S-adenosyl-L-methionine site.

This sequence belongs to the UPF0677 family.

Functionally, exhibits S-adenosyl-L-methionine-dependent methyltransferase activity. The protein is Putative S-adenosyl-L-methionine-dependent methyltransferase MAP_4189c of Mycolicibacterium paratuberculosis (strain ATCC BAA-968 / K-10) (Mycobacterium paratuberculosis).